The chain runs to 175 residues: Sec-independent protein translocase protein TatB (175 aa).

The chain crosses the membrane as a helical span at residues 1–21 (MLDLGLSKMALIGVVALVVLG). Over residues 99-115 (GDPAAADASGGLGATSD) the composition is skewed to low complexity. A disordered region spans residues 99-118 (GDPAAADASGGLGATSDEPS).

It belongs to the TatB family. The Tat system comprises two distinct complexes: a TatABC complex, containing multiple copies of TatA, TatB and TatC subunits, and a separate TatA complex, containing only TatA subunits. Substrates initially bind to the TatABC complex, which probably triggers association of the separate TatA complex to form the active translocon.

It localises to the cell inner membrane. Its function is as follows. Part of the twin-arginine translocation (Tat) system that transports large folded proteins containing a characteristic twin-arginine motif in their signal peptide across membranes. Together with TatC, TatB is part of a receptor directly interacting with Tat signal peptides. TatB may form an oligomeric binding site that transiently accommodates folded Tat precursor proteins before their translocation. This chain is Sec-independent protein translocase protein TatB, found in Burkholderia thailandensis (strain ATCC 700388 / DSM 13276 / CCUG 48851 / CIP 106301 / E264).